The primary structure comprises 330 residues: Aspartate--ammonia ligase (330 aa).

It belongs to the class-II aminoacyl-tRNA synthetase family. AsnA subfamily.

It localises to the cytoplasm. The enzyme catalyses L-aspartate + NH4(+) + ATP = L-asparagine + AMP + diphosphate + H(+). The protein operates within amino-acid biosynthesis; L-asparagine biosynthesis; L-asparagine from L-aspartate (ammonia route): step 1/1. The polypeptide is Aspartate--ammonia ligase (Histophilus somni (strain 2336) (Haemophilus somnus)).